Reading from the N-terminus, the 342-residue chain is S-adenosylmethionine:tRNA ribosyltransferase-isomerase (342 aa).

The protein belongs to the QueA family. Monomer.

It localises to the cytoplasm. The enzyme catalyses 7-aminomethyl-7-carbaguanosine(34) in tRNA + S-adenosyl-L-methionine = epoxyqueuosine(34) in tRNA + adenine + L-methionine + 2 H(+). Its pathway is tRNA modification; tRNA-queuosine biosynthesis. Functionally, transfers and isomerizes the ribose moiety from AdoMet to the 7-aminomethyl group of 7-deazaguanine (preQ1-tRNA) to give epoxyqueuosine (oQ-tRNA). The chain is S-adenosylmethionine:tRNA ribosyltransferase-isomerase from Listeria monocytogenes serotype 4a (strain HCC23).